The following is a 52-amino-acid chain: UPF0057 membrane protein At1g57550 (52 aa).

Helical transmembrane passes span 4–24 (FLEV…RYGL) and 30–50 (VCLL…IYVL).

Belongs to the UPF0057 (PMP3) family.

Its subcellular location is the membrane. The chain is UPF0057 membrane protein At1g57550 from Arabidopsis thaliana (Mouse-ear cress).